Here is a 149-residue protein sequence, read N- to C-terminus: Nucleoside deoxyribosyltransferase (149 aa).

Catalysis depends on Glu90, which acts as the Nucleophile.

This sequence belongs to the nucleoside deoxyribosyltransferase family.

The catalysed reaction is 2-deoxy-D-ribosyl-base(1) + base(2) = 2-deoxy-D-ribosyl-base(2) + base(1).. It functions in the pathway nucleotide metabolism; nucleotide salvage pathway. Functionally, catalyzes the cleavage of the glycosidic bond of 2'-deoxyribonucleosides and the transfer of the deoxyribosyl moiety to an acceptor purine or pyrimidine base. This chain is Nucleoside deoxyribosyltransferase (ntd), found in Lactobacillus johnsonii (strain CNCM I-12250 / La1 / NCC 533).